The following is a 195-amino-acid chain: dITP/XTP pyrophosphatase (195 aa).

Residue 9–14 (TGNKGK) coordinates substrate. Positions 41 and 70 each coordinate Mg(2+). The active-site Proton acceptor is the aspartate 70. Substrate-binding positions include serine 71, 155–158 (FGYD), lysine 178, and 183–184 (HR).

It belongs to the HAM1 NTPase family. Homodimer. Requires Mg(2+) as cofactor.

It carries out the reaction XTP + H2O = XMP + diphosphate + H(+). The enzyme catalyses dITP + H2O = dIMP + diphosphate + H(+). It catalyses the reaction ITP + H2O = IMP + diphosphate + H(+). Its function is as follows. Pyrophosphatase that catalyzes the hydrolysis of nucleoside triphosphates to their monophosphate derivatives, with a high preference for the non-canonical purine nucleotides XTP (xanthosine triphosphate), dITP (deoxyinosine triphosphate) and ITP. Seems to function as a house-cleaning enzyme that removes non-canonical purine nucleotides from the nucleotide pool, thus preventing their incorporation into DNA/RNA and avoiding chromosomal lesions. This chain is dITP/XTP pyrophosphatase, found in Haemophilus influenzae (strain ATCC 51907 / DSM 11121 / KW20 / Rd).